A 919-amino-acid chain; its full sequence is Periodic tryptophan protein 2 homolog (919 aa).

WD repeat units follow at residues 12–50 (GTVY…SDTL), 53–93 (ATRY…LHHF), 94–132 (HFKG…REFN), 142–181 (GPYD…NLIY), and 186–225 (GHKD…EGLR). The interval 238–267 (QREEEEEEEEDQEGDRETTIRGKATPAEEE) is disordered. A compositionally biased stretch (acidic residues) spans 240–251 (EEEEEEEEDQEG). Positions 252–267 (DRETTIRGKATPAEEE) are enriched in basic and acidic residues. 9 WD repeats span residues 286 to 325 (GDFN…LIHS), 328 to 368 (ISDQ…YVLK), 371 to 410 (GHFN…CFVT), 413 to 452 (EHSS…NFRT), 456 to 498 (PRPT…DVLS), 499 to 538 (GHEG…RTKE), 541 to 580 (ALTS…QTGS), 603 to 642 (AKGK…LMKR), and 700 to 740 (KPEI…DPFE). The segment at 882–919 (TKRSLDPLGSEEEAEASEDDSLHLLGGGGRDSEEEMLA) is disordered. Residues 890-900 (GSEEEAEASED) show a composition bias toward acidic residues. 2 positions are modified to phosphoserine: serine 898 and serine 902.

Belongs to the WD repeat PWP2 family. Part of the small subunit (SSU) processome, composed of more than 70 proteins and the RNA chaperone small nucleolar RNA (snoRNA) U3.

It localises to the nucleus. The protein localises to the nucleolus. Functionally, part of the small subunit (SSU) processome, first precursor of the small eukaryotic ribosomal subunit. During the assembly of the SSU processome in the nucleolus, many ribosome biogenesis factors, an RNA chaperone and ribosomal proteins associate with the nascent pre-rRNA and work in concert to generate RNA folding, modifications, rearrangements and cleavage as well as targeted degradation of pre-ribosomal RNA by the RNA exosome. This is Periodic tryptophan protein 2 homolog from Homo sapiens (Human).